Reading from the N-terminus, the 394-residue chain is Flagellin A (394 aa).

This sequence belongs to the bacterial flagellin family.

The protein resides in the secreted. Its subcellular location is the bacterial flagellum. Its function is as follows. Flagellin is the subunit protein which polymerizes to form the filaments of bacterial flagella. Homomer of FlaA is able to form a functional filament. In Rhizobium meliloti (strain 1021) (Ensifer meliloti), this protein is Flagellin A (flaA).